A 503-amino-acid chain; its full sequence is tRNA-2-methylthio-N(6)-dimethylallyladenosine synthase (503 aa).

The region spanning 5-121 (RSYEIRTFGC…LPVLLERARH (117 aa)) is the MTTase N-terminal domain. 6 residues coordinate [4Fe-4S] cluster: Cys14, Cys50, Cys84, Cys158, Cys162, and Cys165. The Radical SAM core domain occupies 144-380 (RESAYAGWVS…IALQEEISLA (237 aa)). The TRAM domain maps to 383–453 (RELIGTEVEL…PHHLIADAPV (71 aa)).

Belongs to the methylthiotransferase family. MiaB subfamily. Monomer. [4Fe-4S] cluster is required as a cofactor.

Its subcellular location is the cytoplasm. It carries out the reaction N(6)-dimethylallyladenosine(37) in tRNA + (sulfur carrier)-SH + AH2 + 2 S-adenosyl-L-methionine = 2-methylsulfanyl-N(6)-dimethylallyladenosine(37) in tRNA + (sulfur carrier)-H + 5'-deoxyadenosine + L-methionine + A + S-adenosyl-L-homocysteine + 2 H(+). Catalyzes the methylthiolation of N6-(dimethylallyl)adenosine (i(6)A), leading to the formation of 2-methylthio-N6-(dimethylallyl)adenosine (ms(2)i(6)A) at position 37 in tRNAs that read codons beginning with uridine. The chain is tRNA-2-methylthio-N(6)-dimethylallyladenosine synthase from Nocardia farcinica (strain IFM 10152).